Here is a 999-residue protein sequence, read N- to C-terminus: Helicase required for RNAi-mediated heterochromatin assembly 1 (999 aa).

The interval 61–90 is disordered; the sequence is EQIETSETSKTQDSEGNKVDKNLKENKSIR. The span at 70 to 88 shows a compositional bias: basic and acidic residues; it reads KTQDSEGNKVDKNLKENKS. Position 94 is a phosphoserine (Ser-94). Over residues 106–124 the composition is skewed to basic and acidic residues; the sequence is RNDITSGKNREFENEHHPA. Positions 106–131 are disordered; it reads RNDITSGKNREFENEHHPASDTSSWR. An ATP-binding site is contributed by 393–400; that stretch reads GPPGTGKS.

Cid12, hrr1 and rdp1 interact forming the RNA-directed RNA polymerase complex (RDRC). The RDRC complex interacts with the RITS complex via interaction between ago1 and hrr1. Clr4 has a role in mediating this interaction.

It is found in the cytoplasm. The protein resides in the nucleus. It catalyses the reaction ATP + H2O = ADP + phosphate + H(+). Has a role in the RNA interference (RNAi) pathway which is important for heterochromatin formation and accurate chromosome segregation. A member of the RNA-directed RNA polymerase complex (RDRC) which is involved in the generation of small interfering RNAs (siRNAs) and mediate their association with the RNA-induced transcriptional silencing (RITS) complex. RITS acts as a priming complex for dsRNA synthesis at the site of non-coding centromeric RNA. In Schizosaccharomyces pombe (strain 972 / ATCC 24843) (Fission yeast), this protein is Helicase required for RNAi-mediated heterochromatin assembly 1 (hrr1).